The following is a 421-amino-acid chain: 3-isopropylmalate dehydratase large subunit (421 aa).

[4Fe-4S] cluster is bound by residues cysteine 300, cysteine 360, and cysteine 363.

It belongs to the aconitase/IPM isomerase family. LeuC type 2 subfamily. Heterodimer of LeuC and LeuD. Requires [4Fe-4S] cluster as cofactor.

It catalyses the reaction (2R,3S)-3-isopropylmalate = (2S)-2-isopropylmalate. Its pathway is amino-acid biosynthesis; L-leucine biosynthesis; L-leucine from 3-methyl-2-oxobutanoate: step 2/4. Catalyzes the isomerization between 2-isopropylmalate and 3-isopropylmalate, via the formation of 2-isopropylmaleate. This chain is 3-isopropylmalate dehydratase large subunit, found in Lachnoclostridium phytofermentans (strain ATCC 700394 / DSM 18823 / ISDg) (Clostridium phytofermentans).